A 114-amino-acid polypeptide reads, in one-letter code: Nucleoid-associated protein MAE_23910 (114 aa).

Belongs to the YbaB/EbfC family. Homodimer.

Its subcellular location is the cytoplasm. The protein resides in the nucleoid. Its function is as follows. Binds to DNA and alters its conformation. May be involved in regulation of gene expression, nucleoid organization and DNA protection. This is Nucleoid-associated protein MAE_23910 from Microcystis aeruginosa (strain NIES-843 / IAM M-2473).